Reading from the N-terminus, the 291-residue chain is MIKIKVPATSANIGPGFDSLGLALDLFLTLEIHEATTTWQVIHEEPDLPHDITHFIVQAALTLTSNMQPHRLVVKSDIPLARGLGSSSAALLAGLTMANILADLNLSPKEILKQATMLEGHPDNVAPALLGGAISAYYDGHQVYNSSFHIPENIIFTVFIPDYELKTAEARNALPDDFPFKKSIAGSAISNTLIAALANDDWQTAKQLIEKDQFHEQQRHHLVPHLLEIRHIAHQHDVLGTYLSGAGPTVITMAPENEAKILLPALTHLTTSGRTIQCHLNRSGLTITKEE.

Residue 79 to 89 participates in ATP binding; sequence PLARGLGSSSA.

It belongs to the GHMP kinase family. Homoserine kinase subfamily.

Its subcellular location is the cytoplasm. The enzyme catalyses L-homoserine + ATP = O-phospho-L-homoserine + ADP + H(+). It participates in amino-acid biosynthesis; L-threonine biosynthesis; L-threonine from L-aspartate: step 4/5. In terms of biological role, catalyzes the ATP-dependent phosphorylation of L-homoserine to L-homoserine phosphate. This Leuconostoc citreum (strain KM20) protein is Homoserine kinase.